The sequence spans 357 residues: uncharacterized protein (357 aa).

This is an uncharacterized protein from Caenorhabditis elegans.